The chain runs to 62 residues: MKFSYFLLLLLSLSNFQNNPVAMLDTIACIENKDTCRLKNCPRLHNVVGTCYEGKGKCCHKN.

The first 16 residues, 1-16, serve as a signal peptide directing secretion; that stretch reads MKFSYFLLLLLSLSNF. Intrachain disulfides connect cysteine 29/cysteine 58, cysteine 36/cysteine 51, and cysteine 41/cysteine 59.

Belongs to the beta-defensin family. As to expression, only expressed in epididymis (corpus and cauda).

It localises to the secreted. Functionally, has antibacterial activity. In Mus musculus (Mouse), this protein is Beta-defensin 37 (Defb37).